The following is a 368-amino-acid chain: Aminomethyltransferase (368 aa).

This sequence belongs to the GcvT family. In terms of assembly, the glycine cleavage system is composed of four proteins: P, T, L and H.

The catalysed reaction is N(6)-[(R)-S(8)-aminomethyldihydrolipoyl]-L-lysyl-[protein] + (6S)-5,6,7,8-tetrahydrofolate = N(6)-[(R)-dihydrolipoyl]-L-lysyl-[protein] + (6R)-5,10-methylene-5,6,7,8-tetrahydrofolate + NH4(+). Its function is as follows. The glycine cleavage system catalyzes the degradation of glycine. The chain is Aminomethyltransferase from Thermoanaerobacter sp. (strain X514).